The primary structure comprises 247 residues: Triosephosphate isomerase (247 aa).

A substrate-binding site is contributed by 8–10 (NWK). The Electrophile role is filled by His94. Glu165 serves as the catalytic Proton acceptor. Substrate is bound by residues Gly171 and Ser210.

The protein belongs to the triosephosphate isomerase family. Homodimer.

It is found in the cytoplasm. It carries out the reaction D-glyceraldehyde 3-phosphate = dihydroxyacetone phosphate. It functions in the pathway carbohydrate biosynthesis; gluconeogenesis. It participates in carbohydrate degradation; glycolysis; D-glyceraldehyde 3-phosphate from glycerone phosphate: step 1/1. Functionally, involved in the gluconeogenesis. Catalyzes stereospecifically the conversion of dihydroxyacetone phosphate (DHAP) to D-glyceraldehyde-3-phosphate (G3P). The sequence is that of Triosephosphate isomerase from Aquifex aeolicus (strain VF5).